Reading from the N-terminus, the 346-residue chain is Small ribosomal subunit biogenesis GTPase RsgA (346 aa).

The tract at residues 1–26 is disordered; it reads MAKRKLTQNQTRRIQSNNAKTLHRHK. The segment covering 7 to 20 has biased composition (polar residues); that stretch reads TQNQTRRIQSNNAK. The CP-type G domain maps to 103–271; sequence ENEISRPDYY…LIDSPGIREF (169 aa). GTP-binding positions include 159-162 and 213-221; these read NKVD and GQSGVGKSS. Zn(2+)-binding residues include Cys295, Cys300, His302, and Cys308.

It belongs to the TRAFAC class YlqF/YawG GTPase family. RsgA subfamily. As to quaternary structure, monomer. Associates with 30S ribosomal subunit, binds 16S rRNA. It depends on Zn(2+) as a cofactor.

The protein localises to the cytoplasm. Its function is as follows. One of several proteins that assist in the late maturation steps of the functional core of the 30S ribosomal subunit. Helps release RbfA from mature subunits. May play a role in the assembly of ribosomal proteins into the subunit. Circularly permuted GTPase that catalyzes slow GTP hydrolysis, GTPase activity is stimulated by the 30S ribosomal subunit. The chain is Small ribosomal subunit biogenesis GTPase RsgA from Haemophilus influenzae (strain PittGG).